The following is a 526-amino-acid chain: tRNA modification GTPase MSS1, mitochondrial (526 aa).

Residues 1–19 (MNSASFLQSRLISRSFLVR) constitute a mitochondrion transit peptide. Residues 274–444 (GIKLVLLGAP…LISTLTSNFE (171 aa)) form the TrmE-type G domain. GTP-binding positions include 281–288 (GAPNVGKS), 328–332 (DTAGI), and 394–397 (NKSD).

The protein belongs to the TRAFAC class TrmE-Era-EngA-EngB-Septin-like GTPase superfamily. TrmE GTPase family. In terms of assembly, forms a heterodimer with MTO1.

The protein resides in the mitochondrion. GTPase involved in the 5-carboxymethylaminomethyl modification (mnm(5)s(2)U34) of the wobble uridine base in mitochondrial tRNAs. Involved in the expression of cytochrome c oxidase subunit 1 (COX1). Works in association with the small subunit of mitoribosomes. The chain is tRNA modification GTPase MSS1, mitochondrial (MSS1) from Saccharomyces cerevisiae (strain ATCC 204508 / S288c) (Baker's yeast).